Here is a 139-residue protein sequence, read N- to C-terminus: Lamprin 0.9 (139 aa).

An N-terminal signal peptide occupies residues 1–19; the sequence is MAAAIQALLVLALLHLATA. 8 tandem repeats follow at residues 42–46, 47–51, 52–56, 57–61, 62–66, 67–71, 92–96, and 106–110. Positions 42 to 110 are 8 X 5 AA approximate repeats; that stretch reads GGLGYGGLGY…YHHALGGLGY (69 aa).

The polymeric lamprin chains self-aggregate to form fibers and have secondary structures particularly rich in beta-sheets and in beta-turns.

It localises to the secreted. It is found in the extracellular space. The protein resides in the extracellular matrix. In terms of biological role, self-aggregating protein that is part of the soluble form of lamprin. The polypeptide is Lamprin 0.9 (Petromyzon marinus (Sea lamprey)).